Here is a 399-residue protein sequence, read N- to C-terminus: RNA-binding protein cabeza (399 aa).

Over residues 1–12 the composition is skewed to gly residues; the sequence is MERGGYGGGSGQ. The tract at residues 1–82 is disordered; that stretch reads MERGGYGGGS…RGGNSYGNGG (82 aa). Over residues 24 to 34 the composition is skewed to polar residues; that stretch reads YQQMPNKTGNY. Residues 43–69 are compositionally biased toward gly residues; the sequence is KQGGGYDSGSGHRGSGGSGNGGGGGGS. In terms of domain architecture, RRM spans 120 to 206; the sequence is DTIFVSGMDP…NAIKVSLAQR (87 aa). Disordered stretches follow at residues 209–276 and 300–399; these read NWNK…QPRD and TPKG…SRPY. The span at 212 to 271 shows a compositional bias: gly residues; the sequence is KGGGGGGGGGGRGGFGGRRGGGGGGGGGGGGGGRFDRGGGGGGGRYDRGGGGGGGGGGGN. A RanBP2-type zinc finger spans residues 275-304; that stretch reads RDGDWKCNSCNNTNFAWRNECNRCKTPKGD. Composition is skewed to gly residues over residues 308–339, 347–361, and 368–380; these read SSGG…GGGY, NSQG…GGGY, and NGGG…GGGG. Residues 387–399 are compositionally biased toward low complexity; the sequence is PMRNDGGMRSRPY.

It belongs to the RRM TET family. As to expression, ubiquitous. Enriched in the brain and central nervous system during embryogenesis. Enriched in the adult head. Embryos contain both isoforms A and B, whereas later in development (heads and torsos) only isoform B is detected.

Its subcellular location is the nucleus. May participate in a function common to the expression of most genes transcribed by RNA polymerase II. The protein is RNA-binding protein cabeza (caz) of Drosophila melanogaster (Fruit fly).